Here is a 264-residue protein sequence, read N- to C-terminus: Nuclear egress protein 1 (264 aa).

The segment covering 1 to 12 (MTVHKNRFRRSR) has biased composition (basic residues). The tract at residues 1 to 22 (MTVHKNRFRRSRSLSVTHRIQK) is disordered. The CCCH-type zinc-finger motif lies at 83–187 (CLEFSPYANE…HIVFQSRTLH (105 aa)).

This sequence belongs to the herpesviridae NEC1 protein family. Forms a heterohexameric complex with NEC2. Interacts with capsid vertex specific component 2/CVC2; this interaction directs the capsid to the host inner nuclear membrane to initiate budding. Phosphorylated at serine residues in the N-terminus. This phosphorylation regulates the localization within the inner nuclear membrane.

It is found in the host nucleus inner membrane. Functionally, plays an essential role in virion nuclear egress, the first step of virion release from infected cell. Within the host nucleus, NEC1 interacts with the newly formed capsid through the vertexes and directs it to the inner nuclear membrane by associating with NEC2. Induces the budding of the capsid at the inner nuclear membrane as well as its envelopment into the perinuclear space. There, the NEC1/NEC2 complex promotes the fusion of the enveloped capsid with the outer nuclear membrane and the subsequent release of the viral capsid into the cytoplasm where it will reach the secondary budding sites in the host Golgi or trans-Golgi network. The polypeptide is Nuclear egress protein 1 (Human herpesvirus 6B (HHV-6 variant B)).